A 293-amino-acid polypeptide reads, in one-letter code: Short-chain dehydrogenase/reductase PhomF (293 aa).

Residues Ile-31 and Asn-102 each contribute to the NADP(+) site. Ser-175 functions as the Proton donor in the catalytic mechanism. The NADP(+) site is built by Tyr-190, Lys-194, and Ser-225. The Proton acceptor role is filled by Tyr-190. Lys-194 (lowers pKa of active site Tyr) is an active-site residue.

The protein belongs to the short-chain dehydrogenases/reductases (SDR) family.

Functionally, short-chain dehydrogenase/reductase; part of the gene cluster that mediates the biosynthesis of the phomopsins, a group of hexapeptide mycotoxins which infects lupins and causes lupinosis disease in livestock. The role of phomF within the phomopsins biosynthesis pathway has still to be determined. The pathway starts with the processing of the precursor phomA by several endopeptidases including kexin proteases as well as the cluster-specific S41 family peptidase phomP1 and the oligopeptidase phomG to produce 10 identical copies of the hexapeptide Tyr-Val-Ile-Pro-Ile-Asp. After being excised from the precursor peptide, the core peptides are cyclized and modified post-translationally by enzymes encoded within the gene cluster. The timing and order of proteolysis of the phomA precursor and PTMs are still unknown. Two tyrosinase-like enzymes, phomQ1 and phomQ2, catalyze the chlorination and hydroxylation of Tyr, respectively. PhomYb, is proposed to be involved in the construction of the macrocyclic structure. The other 4 ustYa family proteins may be involved in PTMs that generate the unique structure of phomopsin A. PhomYa is required for the hydroxylation of C-beta of Tyr. PhomYc, phomYd, and phomYe are responsible for the biosynthesis of 2,3-dehydroisoleucine (dIle), 2,3-dehydroaspartic acid (dAsp), and 3,4-dehydroproline (dPro), respectively. While dIle formation by phomYc is indispensable for the installation of dAsp by phomYd, the order of the other PTMs have not been elucidated yet. Most of the biosynthetic enzymes likely have broad substrate specificity, and thus, there might be a metabolic grid from a precursor to phomopsin A. The enzyme(s) responsible for the biosynthesis of 3,4-dehydrovaline (dVal) have also not been identified yet. Finally, phomM acts as an S-adenosylmethionine-dependent alpha-N-methyltransferase that catalyzes two successive N-methylation reactions, converting N-desmethyl-phomopsin A to phomopsin A and phomopsin A further to an N,N-dimethylated congener called phomopsin E. The chain is Short-chain dehydrogenase/reductase PhomF from Diaporthe leptostromiformis (Lupinosis disease fungus).